The chain runs to 322 residues: Phospho-N-acetylmuramoyl-pentapeptide-transferase (322 aa).

Helical transmembrane passes span 6–26 (ASCIALVSSLTLTVIFLPLLI), 54–74 (TMGGTIFVIAAVISVIWVTAW), 82–102 (VWILVISLLGYGIIGFLDDGI), 122–142 (IIIAVVIVLIASSDHFNFGLY), 145–165 (FAGVVHSVALFVIFIIFWLVG), 176–196 (LDGLATGLSVVAYGTYAYIAF), 200–220 (NFAILAFCMSVIGGLIAFFIF), 227–247 (IFMGDAGSLALGGGLATVSIM), 255–275 (LLVGIVFVCETASVIMQVISF), and 302–322 (VDIVFWIVGLVGSILYLAIWG).

It belongs to the glycosyltransferase 4 family. MraY subfamily. Mg(2+) serves as cofactor.

The protein localises to the cell membrane. The enzyme catalyses UDP-N-acetyl-alpha-D-muramoyl-L-alanyl-gamma-D-glutamyl-L-lysyl-D-alanyl-D-alanine + di-trans,octa-cis-undecaprenyl phosphate = Mur2Ac(oyl-L-Ala-gamma-D-Glu-L-Lys-D-Ala-D-Ala)-di-trans,octa-cis-undecaprenyl diphosphate + UMP. It participates in cell wall biogenesis; peptidoglycan biosynthesis. Functionally, catalyzes the initial step of the lipid cycle reactions in the biosynthesis of the cell wall peptidoglycan: transfers peptidoglycan precursor phospho-MurNAc-pentapeptide from UDP-MurNAc-pentapeptide onto the lipid carrier undecaprenyl phosphate, yielding undecaprenyl-pyrophosphoryl-MurNAc-pentapeptide, known as lipid I. This Lactobacillus helveticus (strain DPC 4571) protein is Phospho-N-acetylmuramoyl-pentapeptide-transferase.